The sequence spans 213 residues: Orotate phosphoribosyltransferase (213 aa).

Position 26 (lysine 26) interacts with 5-phospho-alpha-D-ribose 1-diphosphate. 34 to 35 (FF) contributes to the orotate binding site. Residues 72–73 (YK), arginine 99, lysine 100, lysine 103, histidine 105, and 124–132 (DDVITAGTA) each bind 5-phospho-alpha-D-ribose 1-diphosphate. 2 residues coordinate orotate: threonine 128 and arginine 156.

This sequence belongs to the purine/pyrimidine phosphoribosyltransferase family. PyrE subfamily. As to quaternary structure, homodimer. Mg(2+) is required as a cofactor.

The enzyme catalyses orotidine 5'-phosphate + diphosphate = orotate + 5-phospho-alpha-D-ribose 1-diphosphate. Its pathway is pyrimidine metabolism; UMP biosynthesis via de novo pathway; UMP from orotate: step 1/2. Catalyzes the transfer of a ribosyl phosphate group from 5-phosphoribose 1-diphosphate to orotate, leading to the formation of orotidine monophosphate (OMP). The sequence is that of Orotate phosphoribosyltransferase from Escherichia coli O157:H7.